We begin with the raw amino-acid sequence, 104 residues long: Probable RNA-binding protein PA4753 (104 aa).

The 97-residue stretch at 1–97 folds into the CRM domain; sequence MALTQEQKKQ…NPKPNKNLSN (97 aa).

This is Probable RNA-binding protein PA4753 from Pseudomonas aeruginosa (strain ATCC 15692 / DSM 22644 / CIP 104116 / JCM 14847 / LMG 12228 / 1C / PRS 101 / PAO1).